Consider the following 113-residue polypeptide: Iron-sulfur cluster insertion protein ErpA (113 aa).

3 residues coordinate iron-sulfur cluster: C41, C105, and C107.

It belongs to the HesB/IscA family. Homodimer. Iron-sulfur cluster serves as cofactor.

In terms of biological role, required for insertion of 4Fe-4S clusters for at least IspG. This chain is Iron-sulfur cluster insertion protein ErpA, found in Vibrio vulnificus (strain YJ016).